Reading from the N-terminus, the 356-residue chain is MKLITAPCRALLALPFCYAFSAAGEEARPAEHDDTKTPAITSTSSPSFRFYGELGVGGYMDLEGENKHKYSDGTYIEGGLEMKYGSWFGLIYGEGWTVQADHDGNAWVPDHSWGGFEGGINRFYGGYRTNDGTEIMLSLRQDSSLDDLQWWGDFTPDLGYVIPNTRDIMTALKVQNLSGNFRYSVTATPAGHHDESKAWLHFGKYDRYDDKYTYPAMMNGYIQYDLAEGITWMNGLEITDGTGQLYLTGLLTPNFAARAWHHTGRADGLDVPGSESGMMVSAMYEALKGVYLSTAYTYAKHRPDHADDETTSFMQFGIWYEYGGGRFATAFDSRFYMKNASHDPSDQIFLMQYFYW.

An N-terminal signal peptide occupies residues 1 to 21; the sequence is MKLITAPCRALLALPFCYAFS.

This is an uncharacterized protein from Escherichia coli (strain K12).